The following is a 440-amino-acid chain: Histidinol dehydrogenase homolog 2 (440 aa).

Histidine 265 is a binding site for Zn(2+). Catalysis depends on proton acceptor residues glutamate 333 and histidine 334. Histidine 426 provides a ligand contact to Zn(2+).

The protein belongs to the histidinol dehydrogenase family. Zn(2+) serves as cofactor.

The protein is Histidinol dehydrogenase homolog 2 of Mesorhizobium japonicum (strain LMG 29417 / CECT 9101 / MAFF 303099) (Mesorhizobium loti (strain MAFF 303099)).